The sequence spans 369 residues: Methionine import ATP-binding protein MetN 2 (369 aa).

Residues 33-270 enclose the ABC transporter domain; the sequence is VRFIGLGKTY…PRHEVTRTLL (238 aa). 67-74 contacts ATP; it reads GRSGAGKS.

It belongs to the ABC transporter superfamily. Methionine importer (TC 3.A.1.24) family. As to quaternary structure, the complex is composed of two ATP-binding proteins (MetN), two transmembrane proteins (MetI) and a solute-binding protein (MetQ).

Its subcellular location is the cell inner membrane. It carries out the reaction L-methionine(out) + ATP + H2O = L-methionine(in) + ADP + phosphate + H(+). The enzyme catalyses D-methionine(out) + ATP + H2O = D-methionine(in) + ADP + phosphate + H(+). Functionally, part of the ABC transporter complex MetNIQ involved in methionine import. Responsible for energy coupling to the transport system. The polypeptide is Methionine import ATP-binding protein MetN 2 (Pseudomonas putida (strain ATCC 47054 / DSM 6125 / CFBP 8728 / NCIMB 11950 / KT2440)).